We begin with the raw amino-acid sequence, 305 residues long: Probable lipid kinase YegS-like (305 aa).

Positions 2–134 (HPPAPALLII…DLAKVNDQRY (133 aa)) constitute a DAGKc domain. Residues threonine 40, 66-72 (GDGTINE), and threonine 95 each bind ATP. Positions 215, 218, and 220 each coordinate Mg(2+). Glutamate 271 functions as the Proton acceptor in the catalytic mechanism.

It belongs to the diacylglycerol/lipid kinase family. YegS lipid kinase subfamily. Requires Mg(2+) as cofactor. The cofactor is Ca(2+).

The protein localises to the cytoplasm. Its function is as follows. Probably phosphorylates lipids; the in vivo substrate is unknown. The chain is Probable lipid kinase YegS-like from Serratia proteamaculans (strain 568).